The chain runs to 268 residues: F-actin-capping protein subunit beta (268 aa).

Belongs to the F-actin-capping protein beta subunit family. Component of the F-actin capping complex, composed of a heterodimer of an alpha and a beta subunit.

Its subcellular location is the cytoplasm. It is found in the cytoskeleton. It localises to the actin patch. The protein resides in the nucleus. F-actin-capping proteins bind in a Ca(2+)-independent manner to the fast growing ends of actin filaments (barbed end) thereby blocking the exchange of subunits at these ends. Unlike other capping proteins (such as gelsolin and severin), these proteins do not sever actin filaments. Competes with formin cdc12 for attachment to the actin filaments barbed ends. Slowly replaces cdc12 on the barbed ends in preparation for filament disassembly during contractile ring constriction. The chain is F-actin-capping protein subunit beta (acp2) from Schizosaccharomyces pombe (strain 972 / ATCC 24843) (Fission yeast).